Consider the following 308-residue polypeptide: MAEKSKILIIGGTGYIGKFVVEASAKAGHPTFVLVRESTVSDPAKGKIVESFNNSGVTILYGDLYDHESLVKAIKQVDVVISTVGQMQLADQTKIIAAIKEAGNIKRFFPSEFGMDVDKVNAVEPAKSTFAIKVQIRRAIEAEGIPYTYVSSNCFAGYFLPTLVQPGATDPPRDKVIISGDGNAKAVFNEEHDIGTYTIKAVDDPRTLNKTLYIKPPKNTLSFNELVAIWEKLIGKTLEKIYIPEEQILKDIATSPIPINIILAINHSTFVKGDQTNFVIEPSFGVEASELYPDVKYTTVEEYLSHFA.

Residues 13–16 (TGYI), 35–45 (VRESTVSDPAK), Arg-36, 86–88 (QMQ), 111–113 (SEF), Lys-133, and 153–155 (NCF) each bind NADP(+). Lys-133 (proton donor/acceptor) is an active-site residue.

The protein belongs to the NmrA-type oxidoreductase family. As to expression, in flowers, mostly expressed in limbs, and, to a lower extent, in tubes.

It catalyses the reaction eugenol + a carboxylate + NADP(+) = a coniferyl ester + NADPH. The catalysed reaction is eugenol + acetate + NADP(+) = (E)-coniferyl acetate + NADPH. It participates in aromatic compound metabolism; phenylpropanoid biosynthesis. Involved in the biosynthesis of the floral volatile eugenol. Catalyzes the synthesis of the phenylpropene eugenol from coniferyl acetate. Phenylpropenes are produced by plants as defense compounds with antimicrobial and antianimal properties, or as floral attractants of pollinators. This Petunia hybrida (Petunia) protein is Eugenol synthase 1.